Reading from the N-terminus, the 397-residue chain is MIIKLLVALIHYLHETMAVQSIITTPLLVILMSLRSYAFTEPSLHRQQPPSKGGVRAAYWPAWSDFSTSSIDTNYFTHIYYAFVQPAPESFNLEITESYKKWAPKYDGIHNIRPRVTTLLSIGGGGNNATLFSEMASSKQNRASFINSTIHVARKHEFNGLDLDWEWPGDEKDMSNLALLLKEWYKALVVEANTSRKSRLLLTSAVYFNSTISLIGNGPRSYPVRAIRKYLDWASPMCFDYNGAWANETGFNAALYDPNSNISTKYGIGSWIGSGVPAEKLVMGLPLYGRAWELKDPNDHGVGAKAVGPAVDTDGSMDYDEILVFNKDTGAKVVYDEVAVSFYSYSGTTWIGYDDGPSITKKVQFARSMGLKGYFFWAIGKDKDWTISKQASNAWGY.

The first 18 residues, 1–18 (MIIKLLVALIHYLHETMA), serve as a signal peptide directing secretion. The region spanning 54 to 397 (GVRAAYWPAW…SKQASNAWGY (344 aa)) is the GH18 domain. 2 N-linked (GlcNAc...) asparagine glycosylation sites follow: N128 and N147. E166 acts as the Proton donor in catalysis. N-linked (GlcNAc...) asparagine glycans are attached at residues N193, N209, N247, and N261.

The protein belongs to the glycosyl hydrolase 18 family. Chitinase class V subfamily.

The catalysed reaction is Random endo-hydrolysis of N-acetyl-beta-D-glucosaminide (1-&gt;4)-beta-linkages in chitin and chitodextrins.. It participates in glycan degradation; chitin degradation. Its function is as follows. Possesses chitinase activity in vitro toward glycol chitin, carboxymethyl-chitin, colloidal chitin, and the chitin oligosaccharides (N-acetylglucosamine) (GlcNAc)6 and (GlcNAc)5. Hydrolyzes (GlcNAc)6 into (GlcNAc)4 and (GlcNAc)2, or two (GlcNAc)3 molecules. Has the capacity to inhibit hyphal growth of the fungus Trichoderma viride in an agar-plate bioassay. Involved in symbiotic signaling. Required for root hair infection threads (ITs) elongation and nodule development. Possesses Nod factor (NF) hydrolase activity. NFs are lipo-chitooligosaccharide signaling molecules produced by nitrogen-fixing rhizobia to initiate nodulation (symbiosis) on the roots of legumes. Modulates NF levels and signaling to complete transition of infected nodules to functional nitrogen-fixing organs. The polypeptide is Class V chitinase CHIT5 (Lotus japonicus (Lotus corniculatus var. japonicus)).